The primary structure comprises 122 residues: NADPH-dependent 7-cyano-7-deazaguanine reductase (122 aa).

The active-site Thioimide intermediate is the Cys-34. Residue Asp-41 is the Proton donor of the active site. Residues 56–58 and 75–76 each bind substrate; these read VEL and HE.

The protein belongs to the GTP cyclohydrolase I family. QueF type 1 subfamily.

The protein resides in the cytoplasm. It carries out the reaction 7-aminomethyl-7-carbaguanine + 2 NADP(+) = 7-cyano-7-deazaguanine + 2 NADPH + 3 H(+). It functions in the pathway tRNA modification; tRNA-queuosine biosynthesis. Its function is as follows. Catalyzes the NADPH-dependent reduction of 7-cyano-7-deazaguanine (preQ0) to 7-aminomethyl-7-deazaguanine (preQ1). This is NADPH-dependent 7-cyano-7-deazaguanine reductase from Anaeromyxobacter sp. (strain Fw109-5).